A 534-amino-acid chain; its full sequence is Solute carrier family 22 member 15 (534 aa).

A helical transmembrane segment spans residues 22-42 (FLLAVLLQLYSATEAIIITIL). 3 N-linked (GlcNAc...) asparagine glycosylation sites follow: Asn52, Asn58, and Asn83. A run of 11 helical transmembrane segments spans residues 97–117 (AAYE…IGVI), 136–156 (LALE…PLFL), 161–181 (LVGV…NECI), 191–211 (SLGS…GYFI), 216–236 (LLAL…LCIP), 297–317 (TLIM…LTLS), 327–347 (LNLA…MYLI), 356–376 (GSLA…MLVP), 391–411 (TLSL…YIYS), 424–444 (MGVC…IPAL), and 450–470 (ALPF…SLLL). The N-linked (GlcNAc...) asparagine glycan is linked to Asn513.

It belongs to the major facilitator (TC 2.A.1) superfamily. Organic cation transporter (TC 2.A.1.19) family.

It is found in the membrane. Its function is as follows. Probably transports organic cations. This Xenopus tropicalis (Western clawed frog) protein is Solute carrier family 22 member 15 (slc22a15).